A 283-amino-acid polypeptide reads, in one-letter code: MELNFTKMEGLGNDFVMLDDRNGAIVQTVPYPVLAKKLCSRRFGVGGDGIIIIIDSETADVGFKIFNPDGSEPEMCGNGMRCFAKLVFEQGIVTKQRFTVETLAGTIIPEILLSDTRQVEAICVDMGEPILEPDRIPFKCNRQRAVNEQIQVKGETVSITAVSMGNPHAVIFVDDVKKIDLENLGRAIETHELFPAKTNVEFVTVLNDQELVMRVWERGAGETLACGTGASAVLVAASLNGLTRETALVHLAGGDLSIHWDQQSNHLFKTGPATHVFTGRIKI.

Residues Asn-13 and Asn-67 each coordinate substrate. Cys-76 (proton donor) is an active-site residue. Residues 77–78 (GN), Asn-166, Asn-199, and 217–218 (ER) contribute to the substrate site. The active-site Proton acceptor is Cys-226. 227–228 (GT) lines the substrate pocket.

This sequence belongs to the diaminopimelate epimerase family. In terms of assembly, homodimer.

It localises to the cytoplasm. The enzyme catalyses (2S,6S)-2,6-diaminopimelate = meso-2,6-diaminopimelate. The protein operates within amino-acid biosynthesis; L-lysine biosynthesis via DAP pathway; DL-2,6-diaminopimelate from LL-2,6-diaminopimelate: step 1/1. Its function is as follows. Catalyzes the stereoinversion of LL-2,6-diaminopimelate (L,L-DAP) to meso-diaminopimelate (meso-DAP), a precursor of L-lysine and an essential component of the bacterial peptidoglycan. The sequence is that of Diaminopimelate epimerase from Desulforapulum autotrophicum (strain ATCC 43914 / DSM 3382 / VKM B-1955 / HRM2) (Desulfobacterium autotrophicum).